Here is a 515-residue protein sequence, read N- to C-terminus: Tripartite motif-containing protein 5 (515 aa).

Ala2 carries the N-acetylalanine modification. An RING-type zinc finger spans residues 15-60 (CPICLELLTEPLSLPCGHSFCQACITANHKESMLYKEEERSCPVCR). Position 87 is a phosphoserine (Ser87). The B box-type zinc-finger motif lies at 92 to 133 (QKVDHCARHGEKLLLFCQEDSKVICWLCERSQEHRGHHTFLM). Cys97, His100, Cys119, and His125 together coordinate Zn(2+). Residues 137-225 (AQEYHVKLQT…LTKSETEMVQ (89 aa)) are a coiled coil. Positions 187 to 200 (FEQLREILDWEESN) are required for interaction with GABARAP and for autophagy. The B30.2/SPRY domain occupies 283 to 515 (LKGMLDMFRE…VPMTLCSPSS (233 aa)).

This sequence belongs to the TRIM/RBCC family. In terms of assembly, can form homodimers and homotrimers. In addition to lower-order dimerization, also exhibits a higher-order multimerization and both low- and high-order multimerizations are essential for its restriction activity. Interacts with BTBD1 and BTBD2. Interacts with PSMC4, PSMC5, PSMD7 and HSPA8/HSC70. Interacts (via B30.2/SPRY domain) with HSPA1A/B. Interacts with PSMC2, MAP3K7/TAK1, TAB2 and TAB3. Interacts with SQSTM1. Interacts with TRIM6 and TRIM34. Interacts with ULK1 (phosphorylated form), GABARAP, GABARAPL1, GABARAPL2, MAP1LC3A, MAP1LC3C and BECN1. Post-translationally, degraded in a proteasome-independent fashion in the absence of viral infection but in a proteasome-dependent fashion following exposure to restriction sensitive virus. In terms of processing, autoubiquitinated in a RING finger- and UBE2D2-dependent manner. Monoubiquitinated by TRIM21. Deubiquitinated by Yersinia YopJ. Ubiquitination may not lead to proteasomal degradation.

It is found in the cytoplasm. The protein localises to the nucleus. It catalyses the reaction S-ubiquitinyl-[E2 ubiquitin-conjugating enzyme]-L-cysteine + [acceptor protein]-L-lysine = [E2 ubiquitin-conjugating enzyme]-L-cysteine + N(6)-ubiquitinyl-[acceptor protein]-L-lysine.. The protein operates within protein modification; protein ubiquitination. In terms of biological role, capsid-specific restriction factor that prevents infection from non-host-adapted retroviruses. Blocks viral replication early in the life cycle, after viral entry but before reverse transcription. In addition to acting as a capsid-specific restriction factor, also acts as a pattern recognition receptor that activates innate immune signaling in response to the retroviral capsid lattice. Binding to the viral capsid triggers its E3 ubiquitin ligase activity, and in concert with the heterodimeric ubiquitin conjugating enzyme complex UBE2V1-UBE2N (also known as UBC13-UEV1A complex) generates 'Lys-63'-linked polyubiquitin chains, which in turn are catalysts in the autophosphorylation of the MAP3K7/TAK1 complex (includes TAK1, TAB2, and TAB3). Activation of the MAP3K7/TAK1 complex by autophosphorylation results in the induction and expression of NF-kappa-B and MAPK-responsive inflammatory genes, thereby leading to an innate immune response in the infected cell. Restricts infection by human immunodeficiency virus type 1 (HIV-1), simian immunodeficiency virus (SIV-mac) and N-tropic murine leukemia viruse (N-MLV). Plays a role in regulating autophagy through activation of autophagy regulator BECN1 by causing its dissociation from its inhibitors BCL2 and TAB2. This chain is Tripartite motif-containing protein 5 (TRIM5), found in Chlorocebus tantalus (Tantalus monkey).